A 127-amino-acid chain; its full sequence is UPF0102 protein Geob_1494 (127 aa).

It belongs to the UPF0102 family.

The protein is UPF0102 protein Geob_1494 of Geotalea daltonii (strain DSM 22248 / JCM 15807 / FRC-32) (Geobacter daltonii).